The sequence spans 123 residues: Small ribosomal subunit protein uS13 (123 aa).

The interval 95 to 123 (GLPVRGQKTKTNARTRKGPKRTVGRKKKK) is disordered. A compositionally biased stretch (basic residues) spans 101–123 (QKTKTNARTRKGPKRTVGRKKKK).

The protein belongs to the universal ribosomal protein uS13 family. As to quaternary structure, part of the 30S ribosomal subunit. Forms a loose heterodimer with protein S19. Forms two bridges to the 50S subunit in the 70S ribosome.

In terms of biological role, located at the top of the head of the 30S subunit, it contacts several helices of the 16S rRNA. In the 70S ribosome it contacts the 23S rRNA (bridge B1a) and protein L5 of the 50S subunit (bridge B1b), connecting the 2 subunits; these bridges are implicated in subunit movement. Contacts the tRNAs in the A and P-sites. The chain is Small ribosomal subunit protein uS13 from Alkaliphilus metalliredigens (strain QYMF).